Consider the following 363-residue polypeptide: RNA polymerase I-specific transcription initiation factor RRN5 (363 aa).

The disordered stretch occupies residues 301 to 344 (LSRRDAPPVHQDENQENQENQENQEQDNTASEGESEAERDEIDE). Residues 302 to 313 (SRRDAPPVHQDE) show a composition bias toward basic and acidic residues. Low complexity predominate over residues 317–328 (NQENQENQEQDN). Positions 333-344 (GESEAERDEIDE) are enriched in acidic residues.

In terms of assembly, component of the UAF (upstream activation factor) complex which consists of UAF30, RRN5, RRN9, RRN10, and histones H3 and H4.

The protein resides in the nucleus. It is found in the nucleolus. In terms of biological role, component of the UAF (upstream activation factor) complex which interacts with the upstream element of the RNA polymerase I promoter and forms a stable preinitiation complex. Together with SPT15/TBP UAF seems to stimulate basal transcription to a fully activated level. This Saccharomyces cerevisiae (strain ATCC 204508 / S288c) (Baker's yeast) protein is RNA polymerase I-specific transcription initiation factor RRN5 (RRN5).